The chain runs to 89 residues: Small ribosomal subunit protein uS15 (89 aa).

Residues 1–21 show a composition bias toward basic and acidic residues; the sequence is MVLDPTQKKSVIDAHAKHEGD. The segment at 1 to 24 is disordered; sequence MVLDPTQKKSVIDAHAKHEGDTGS.

This sequence belongs to the universal ribosomal protein uS15 family. Part of the 30S ribosomal subunit. Forms a bridge to the 50S subunit in the 70S ribosome, contacting the 23S rRNA.

In terms of biological role, one of the primary rRNA binding proteins, it binds directly to 16S rRNA where it helps nucleate assembly of the platform of the 30S subunit by binding and bridging several RNA helices of the 16S rRNA. Forms an intersubunit bridge (bridge B4) with the 23S rRNA of the 50S subunit in the ribosome. The polypeptide is Small ribosomal subunit protein uS15 (Desulfovibrio desulfuricans (strain ATCC 27774 / DSM 6949 / MB)).